The following is a 636-amino-acid chain: 1-deoxy-D-xylulose-5-phosphate synthase (636 aa).

Thiamine diphosphate is bound by residues His-72 and Gly-113–Ala-115. Asp-144 contacts Mg(2+). Residues Gly-145–Ala-146, Asn-174, Tyr-287, and Glu-370 each bind thiamine diphosphate. Residue Asn-174 coordinates Mg(2+).

The protein belongs to the transketolase family. DXPS subfamily. As to quaternary structure, homodimer. Requires Mg(2+) as cofactor. It depends on thiamine diphosphate as a cofactor.

It carries out the reaction D-glyceraldehyde 3-phosphate + pyruvate + H(+) = 1-deoxy-D-xylulose 5-phosphate + CO2. The protein operates within metabolic intermediate biosynthesis; 1-deoxy-D-xylulose 5-phosphate biosynthesis; 1-deoxy-D-xylulose 5-phosphate from D-glyceraldehyde 3-phosphate and pyruvate: step 1/1. In terms of biological role, catalyzes the acyloin condensation reaction between C atoms 2 and 3 of pyruvate and glyceraldehyde 3-phosphate to yield 1-deoxy-D-xylulose-5-phosphate (DXP). The protein is 1-deoxy-D-xylulose-5-phosphate synthase of Crocosphaera subtropica (strain ATCC 51142 / BH68) (Cyanothece sp. (strain ATCC 51142)).